The chain runs to 260 residues: Snake venom serine protease homolog 1 (260 aa).

The signal sequence occupies residues 1–18; that stretch reads MVLIRVLANLLILQLSYA. The propeptide occupies 19 to 24; sequence QKSSEL. The 227-residue stretch at 25-251 folds into the Peptidase S1 domain; the sequence is IIGGDECNIN…HLDWIKSIIA (227 aa). 6 disulfides stabilise this stretch: cysteine 31/cysteine 165, cysteine 52/cysteine 68, cysteine 100/cysteine 258, cysteine 144/cysteine 212, cysteine 176/cysteine 191, and cysteine 202/cysteine 227. N-linked (GlcNAc...) asparagine glycans are attached at residues asparagine 83, asparagine 123, and asparagine 124.

Belongs to the peptidase S1 family. Snake venom subfamily. As to expression, expressed by the venom gland.

Its subcellular location is the secreted. In terms of biological role, snake venom serine protease homolog that may act in the hemostasis system of the prey. In Trimeresurus stejnegeri (Chinese green tree viper), this protein is Snake venom serine protease homolog 1.